The primary structure comprises 144 residues: 3-dehydroquinate dehydratase (144 aa).

Tyr23 (proton acceptor) is an active-site residue. Substrate contacts are provided by Asn74, His80, and Asp87. His100 functions as the Proton donor in the catalytic mechanism. Substrate contacts are provided by residues Leu101–Ser102 and Arg111.

It belongs to the type-II 3-dehydroquinase family. Homododecamer.

The catalysed reaction is 3-dehydroquinate = 3-dehydroshikimate + H2O. Its pathway is metabolic intermediate biosynthesis; chorismate biosynthesis; chorismate from D-erythrose 4-phosphate and phosphoenolpyruvate: step 3/7. In terms of biological role, catalyzes a trans-dehydration via an enolate intermediate. This chain is 3-dehydroquinate dehydratase, found in Hydrogenovibrio crunogenus (strain DSM 25203 / XCL-2) (Thiomicrospira crunogena).